A 315-amino-acid polypeptide reads, in one-letter code: Ribosomal RNA small subunit methyltransferase H (315 aa).

Residues 37 to 39, Asp57, Phe83, Asp105, and Gln112 contribute to the S-adenosyl-L-methionine site; that span reads GGH.

It belongs to the methyltransferase superfamily. RsmH family.

It is found in the cytoplasm. The enzyme catalyses cytidine(1402) in 16S rRNA + S-adenosyl-L-methionine = N(4)-methylcytidine(1402) in 16S rRNA + S-adenosyl-L-homocysteine + H(+). Functionally, specifically methylates the N4 position of cytidine in position 1402 (C1402) of 16S rRNA. In Pseudomonas putida (strain ATCC 47054 / DSM 6125 / CFBP 8728 / NCIMB 11950 / KT2440), this protein is Ribosomal RNA small subunit methyltransferase H.